Here is a 948-residue protein sequence, read N- to C-terminus: UvrABC system protein A (948 aa).

33 to 40 (GLSGSGKS) is a binding site for ATP. A C4-type zinc finger spans residues 252–279 (CPICGFSIGELEPRMFSFNSPFGACPTC). ABC transporter domains lie at 309-587 (WIPT…KKSL) and 607-935 (ASDR…KYLK). 639 to 646 (GVSGSGKS) contacts ATP. The C4-type zinc finger occupies 738-764 (CEACKGDGIIKIEMHFLPDVYVPCEVC).

This sequence belongs to the ABC transporter superfamily. UvrA family. In terms of assembly, forms a heterotetramer with UvrB during the search for lesions.

Its subcellular location is the cytoplasm. Functionally, the UvrABC repair system catalyzes the recognition and processing of DNA lesions. UvrA is an ATPase and a DNA-binding protein. A damage recognition complex composed of 2 UvrA and 2 UvrB subunits scans DNA for abnormalities. When the presence of a lesion has been verified by UvrB, the UvrA molecules dissociate. The polypeptide is UvrABC system protein A (Staphylococcus aureus (strain MSSA476)).